The primary structure comprises 256 residues: Omega-amidase YafV (256 aa).

One can recognise a CN hydrolase domain in the interval Leu4–Met234. Glu42 serves as the catalytic Proton acceptor. The Proton donor role is filled by Lys107. Cys141 functions as the Nucleophile in the catalytic mechanism.

Belongs to the carbon-nitrogen hydrolase superfamily. NIT1/NIT2 family.

The enzyme catalyses a monoamide of a dicarboxylate + H2O = a dicarboxylate + NH4(+). Functionally, hydrolyzes alpha-ketoglutaramate (a-KGM) to alpha-ketoglutarate (alpha-KG) and ammonia, has weak activity on L-glutamine, almost no activity on deaminated glutathione (dGSH) and none on glutathione. May function as a metabolite repair enzyme. The sequence is that of Omega-amidase YafV (yafV) from Escherichia coli (strain K12).